The chain runs to 89 residues: Large ribosomal subunit protein eL34 (89 aa).

It belongs to the eukaryotic ribosomal protein eL34 family.

The protein is Large ribosomal subunit protein eL34 of Methanococcus maripaludis (strain C6 / ATCC BAA-1332).